The primary structure comprises 188 residues: Gamma-glutamylcyclotransferase (188 aa).

19 to 22 lines the substrate pocket; sequence YFAY. The Proton acceptor role is filled by Glu-98. Ser-173 carries the post-translational modification Phosphoserine.

It belongs to the gamma-glutamylcyclotransferase family. In terms of assembly, homodimer.

The catalysed reaction is an alpha-(gamma-L-glutamyl)-L-amino acid = 5-oxo-L-proline + an L-alpha-amino acid. In terms of biological role, catalyzes the formation of 5-oxoproline from gamma-glutamyl dipeptides and may play a significant role in glutathione homeostasis. Induces release of cytochrome c from mitochondria with resultant induction of apoptosis. The sequence is that of Gamma-glutamylcyclotransferase (Ggct) from Mus musculus (Mouse).